Reading from the N-terminus, the 150-residue chain is MLAQFDVNLVVLLVLLICGLLSQNAAVTIAAGILIVIKITPLNQFFPYIQAHGLNLGILILTIGVLTPIASGKLSGESILKSFISFKSLVAIAIGLLVAWLGGRGVKLMSSQPDVVAGLLIGTVAGVALLRGVPVGPLIAAGLLSLFIGK.

The next 4 helical transmembrane spans lie at 22-42 (SQNA…ITPL), 45-65 (FFPY…TIGV), 83-103 (FISF…WLGG), and 115-135 (VVAG…GVPV).

The protein belongs to the UPF0756 family.

It localises to the cell membrane. The sequence is that of UPF0756 membrane protein A1S_2121 from Acinetobacter baumannii (strain ATCC 17978 / DSM 105126 / CIP 53.77 / LMG 1025 / NCDC KC755 / 5377).